Reading from the N-terminus, the 203-residue chain is GTP cyclohydrolase 1 (203 aa).

Zn(2+) contacts are provided by Cys-87, His-90, and Cys-158.

It belongs to the GTP cyclohydrolase I family. As to quaternary structure, homomer.

It carries out the reaction GTP + H2O = 7,8-dihydroneopterin 3'-triphosphate + formate + H(+). It participates in cofactor biosynthesis; 7,8-dihydroneopterin triphosphate biosynthesis; 7,8-dihydroneopterin triphosphate from GTP: step 1/1. The sequence is that of GTP cyclohydrolase 1 from Xylella fastidiosa (strain M23).